The sequence spans 104 residues: ATP synthase subunit c (104 aa).

A run of 2 helical transmembrane segments spans residues 31 to 51 and 75 to 95; these read SMIAAGLGLGLAALGGAIGMG and MFIALAMIEAQVIYALVIALI.

This sequence belongs to the ATPase C chain family. In terms of assembly, F-type ATPases have 2 components, F(1) - the catalytic core - and F(0) - the membrane proton channel. F(1) has five subunits: alpha(3), beta(3), gamma(1), delta(1), epsilon(1). F(0) has three main subunits: a(1), b(2) and c(10-14). The alpha and beta chains form an alternating ring which encloses part of the gamma chain. F(1) is attached to F(0) by a central stalk formed by the gamma and epsilon chains, while a peripheral stalk is formed by the delta and b chains.

Its subcellular location is the cell inner membrane. In terms of biological role, f(1)F(0) ATP synthase produces ATP from ADP in the presence of a proton or sodium gradient. F-type ATPases consist of two structural domains, F(1) containing the extramembraneous catalytic core and F(0) containing the membrane proton channel, linked together by a central stalk and a peripheral stalk. During catalysis, ATP synthesis in the catalytic domain of F(1) is coupled via a rotary mechanism of the central stalk subunits to proton translocation. Its function is as follows. Key component of the F(0) channel; it plays a direct role in translocation across the membrane. A homomeric c-ring of between 10-14 subunits forms the central stalk rotor element with the F(1) delta and epsilon subunits. This chain is ATP synthase subunit c, found in Sulfurimonas denitrificans (strain ATCC 33889 / DSM 1251) (Thiomicrospira denitrificans (strain ATCC 33889 / DSM 1251)).